Here is a 62-residue protein sequence, read N- to C-terminus: Conotoxin reg3.7 (62 aa).

The N-terminal stretch at 1-15 is a signal peptide; it reads RVLLTICLLLFPLSA. The propeptide occupies 16 to 45; sequence LPLDGDQPADQPARHMQSAERNPRFDPVKR. Residues 17-37 are disordered; sequence PLDGDQPADQPARHMQSAERN. 3 disulfide bridges follow: Cys46/Cys60, Cys47/Cys58, and Cys52/Cys61. Cys61 is modified (cysteine amide).

The protein belongs to the conotoxin M superfamily. As to expression, expressed by the venom duct.

Its subcellular location is the secreted. The polypeptide is Conotoxin reg3.7 (Conus regius (Crown cone)).